Here is a 589-residue protein sequence, read N- to C-terminus: ABC transporter G family member 8 (589 aa).

The ABC transporter domain maps to 16 to 261 (LTTSSISYTI…LLFKGFTVPP (246 aa)). An ATP-binding site is contributed by 62-69 (GPSGAGKS). An ABC transmembrane type-2 domain is found at 311–521 (TEISLLARRF…ALDALLINEY (211 aa)). A run of 7 helical transmembrane segments spans residues 335–355 (ALEALVVGLVLGTIYINIGIG), 365–385 (MFAFTLTFLLSSTTETLPIFI), 412–432 (VFLPYLFVISIIYSVSVYFLI), 441–461 (FGYFVLVIWIILLMANSFVLF), 470–490 (ITGTSLVTILLAAFFLFSGYF), 499–519 (YWLFMYFFSMYKYALDALLIN), and 560–580 (FNVYVLLGFFVLYRVLCFLAL).

The protein belongs to the ABC transporter superfamily. ABCG family. Eye pigment precursor importer (TC 3.A.1.204) subfamily.

The protein localises to the membrane. This Arabidopsis thaliana (Mouse-ear cress) protein is ABC transporter G family member 8 (ABCG8).